We begin with the raw amino-acid sequence, 952 residues long: Microtubule-associated protein 6 (952 aa).

A calmodulin-binding region spans residues 1–15 (MAWPCITRACCIARF). S-palmitoyl cysteine attachment occurs at residues C5, C10, and C11. 2 disordered regions span residues 37-457 (TEHP…RAVA) and 486-952 (IKPV…EGSP). The segment covering 41–55 (GAPPQPPAPPQPGLA) has biased composition (pro residues). S98 carries the phosphoserine modification. A compositionally biased stretch (low complexity) spans 105–117 (ASGSTSGSGPADS). Residues 116–139 (DSVMRQDYRAWKVQRPEPSCRPRS) are mn 1. A compositionally biased stretch (basic and acidic residues) spans 119 to 139 (MRQDYRAWKVQRPEPSCRPRS). The tract at residues 124 to 138 (RAWKVQRPEPSCRPR) is calmodulin-binding. Residue Y141 is modified to Phosphotyrosine. The span at 147–171 (PFERETQYQKDFRAWPLPRRGDHPW) shows a compositional bias: basic and acidic residues. The tract at residues 151–174 (ETQYQKDFRAWPLPRRGDHPWIPK) is mn 2. Residues 160–174 (AWPLPRRGDHPWIPK) form a calmodulin-binding region. Phosphoserine is present on S185. The segment at 187-201 (PVLGMPKRRPQSQER) is calmodulin-binding. S207 carries the post-translational modification Phosphoserine. Positions 221 to 230 (VPAAGKASGA) are enriched in low complexity. One copy of the Mc-1 repeat lies at 222-267 (PAAGKASGADQRDTRRKAGPAWMVTRTEGHEEKPLPPAQSQTQEGG). The 5 X approximate tandem repeat Mc stretch occupies residues 222 to 451 (PAAGKASGAD…HAQGTGPEGG (230 aa)). Calmodulin-binding regions lie at residues 235–249 (TRRK…TRTE), 280–294 (DTRR…VTRT), 325–339 (RDTR…MVTR), 373–387 (TRRK…TRTE), 421–435 (RKAG…SEGH), 481–495 (RAWT…IKAK), 532–546 (RRRI…FKES), and 559–573 (PKKT…RKAK). The Mc-2 repeat unit spans residues 268-313 (PAAGKASGADQRDTRRKAGPAWMVTRTEGHEEKPLPPAQSQTQEGG). One copy of the Mc-3 repeat lies at 314 to 359 (PAAGKASGADQRDTRRKAGPAWMVTRTEGHEETPLPPAQSQTQEGG). The stretch at 360–405 (PAAGKASGADQRDTRRKAGPAWMVTRTEGHEETPLPPAQSQTQEGG) is one Mc-4 repeat. Residues 406-451 (PAAGKASGADERDTRRKAGPAWMVRRSEGHEQTTAAHAQGTGPEGG) form a Mc-5 repeat. Residues 473–496 (SSSYRNEFRAWTDIKPVKPIKAKP) are mn 3. Over residues 542–551 (PFKESPKVEK) the composition is skewed to basic and acidic residues. The segment covering 552–567 (PSVQSSKPKKTSTSQK) has biased composition (low complexity). S590 carries the post-translational modification Phosphoserine. Residues 595–621 (KPDDKEQSKEMNNKLAEAKESRVKPTS) are compositionally biased toward basic and acidic residues. S681 is subject to Phosphoserine. Positions 711–725 (KDQDHMASELLKNKD) are enriched in basic and acidic residues. A Phosphoserine modification is found at S736. The segment covering 761–775 (APAPTPLKDPGPVIP) has biased composition (pro residues). Composition is skewed to basic and acidic residues over residues 776-792 (EPEK…RKDQ) and 821-831 (PAKDTGTDLKG). Over residues 903-915 (VPAPTKDPGPTAP) the composition is skewed to pro residues. Position 951 is a phosphoserine (S951).

Belongs to the STOP family. Interacts with calmodulin (via C-terminus); the interaction is dependent on Ca(2+). Interacts (via C-terminus) with TMEM106B (via N-terminus). Interacts with ZDHHC13 (via ANK repeats). Interacts with ZDHHC17 (via ANK repeats). In terms of processing, palmitoylated. Probably depalmitoylated by ABHD17A, ABHD17B and ABHD17C. During neuronal polarization, palmitoylation and depalmitoylation cycles regulate MAP6 shuttling between secretory vesicles and microtubules, and its polarized distribution in the axon. As to expression, isoform 1 is specifically expressed in adult brain. Isoform 2 is predominantly expressed in embryonic brain; expression persists at low levels in the adult brain.

It is found in the cytoplasm. Its subcellular location is the cytoskeleton. The protein resides in the golgi apparatus. It localises to the cell projection. The protein localises to the axon. It is found in the dendrite. Its subcellular location is the cytoplasmic vesicle. The protein resides in the secretory vesicle membrane. Involved in microtubule stabilization in many cell types, including neuronal cells. Specifically has microtubule cold stabilizing activity. Involved in dendrite morphogenesis and maintenance by regulating lysosomal trafficking via its interaction with TMEM106B. Regulates KIF5A-mediated axonal cargo transport. Regulates axonal growth during neuron polarization. In Rattus norvegicus (Rat), this protein is Microtubule-associated protein 6 (Map6).